A 326-amino-acid polypeptide reads, in one-letter code: GTP 3',8-cyclase (326 aa).

Positions 4–227 constitute a Radical SAM core domain; it reads KHERNINYMR…LTPQKNILGN (224 aa). R13 is a GTP binding site. Residues C20 and C24 each contribute to the [4Fe-4S] cluster site. Position 26 (Y26) interacts with S-adenosyl-L-methionine. C27 contributes to the [4Fe-4S] cluster binding site. R63 is a binding site for GTP. Position 67 (G67) interacts with S-adenosyl-L-methionine. T94 contacts GTP. S118 is a binding site for S-adenosyl-L-methionine. K155 provides a ligand contact to GTP. M189 is a binding site for S-adenosyl-L-methionine. [4Fe-4S] cluster-binding residues include C253 and C256. GTP is bound at residue 258–260; it reads RIR. C270 contacts [4Fe-4S] cluster.

This sequence belongs to the radical SAM superfamily. MoaA family. In terms of assembly, monomer and homodimer. The cofactor is [4Fe-4S] cluster.

The catalysed reaction is GTP + AH2 + S-adenosyl-L-methionine = (8S)-3',8-cyclo-7,8-dihydroguanosine 5'-triphosphate + 5'-deoxyadenosine + L-methionine + A + H(+). Its pathway is cofactor biosynthesis; molybdopterin biosynthesis. Functionally, catalyzes the cyclization of GTP to (8S)-3',8-cyclo-7,8-dihydroguanosine 5'-triphosphate. This is GTP 3',8-cyclase from Syntrophomonas wolfei subsp. wolfei (strain DSM 2245B / Goettingen).